The chain runs to 341 residues: Glycerol-3-phosphate dehydrogenase [NAD(P)+] (341 aa).

NADPH contacts are provided by Ser-15, Trp-16, Arg-36, and Lys-110. Residues Lys-110, Gly-139, and Ser-141 each coordinate sn-glycerol 3-phosphate. Position 143 (Ala-143) interacts with NADPH. Lys-194, Asp-247, Ser-257, Arg-258, and Asn-259 together coordinate sn-glycerol 3-phosphate. Lys-194 functions as the Proton acceptor in the catalytic mechanism. Arg-258 contributes to the NADPH binding site. Positions 282 and 284 each coordinate NADPH.

The protein belongs to the NAD-dependent glycerol-3-phosphate dehydrogenase family.

It localises to the cytoplasm. The enzyme catalyses sn-glycerol 3-phosphate + NAD(+) = dihydroxyacetone phosphate + NADH + H(+). It carries out the reaction sn-glycerol 3-phosphate + NADP(+) = dihydroxyacetone phosphate + NADPH + H(+). Its pathway is membrane lipid metabolism; glycerophospholipid metabolism. Catalyzes the reduction of the glycolytic intermediate dihydroxyacetone phosphate (DHAP) to sn-glycerol 3-phosphate (G3P), the key precursor for phospholipid synthesis. This Stenotrophomonas maltophilia (strain R551-3) protein is Glycerol-3-phosphate dehydrogenase [NAD(P)+].